Here is a 313-residue protein sequence, read N- to C-terminus: Protein FixB (313 aa).

255-283 (LYLAVGISGQIQHMVGANASQTIFAINKD) lines the FAD pocket.

This sequence belongs to the ETF alpha-subunit/FixB family. In terms of assembly, heterodimer of FixA and FixB.

The protein operates within amine and polyamine metabolism; carnitine metabolism. In terms of biological role, required for anaerobic carnitine reduction. May bring reductant to CaiA. The polypeptide is Protein FixB (Escherichia coli O81 (strain ED1a)).